A 292-amino-acid polypeptide reads, in one-letter code: MEITASLVKELRERTGAGMMECKKALVENAGDIDAAAEWLRKSGLAKADKKADRVAAEGRIATAQAGGKAVLVEVNSETDFVAKDENFLAFTEVVANAALNSDAADAEALKSVKLDSGETIEERRAAVIAKVGENLQVRRLVRIDSANNVAAYVHGGRIGVLVELKGGDIELARGIAMHIAAMNPPHVKASDVPAEFVAKEKEIELAKMSEKDKAKPADILEKIISGKISKIVNEVTLYGQPYVLNTDQTVEQAVKAAGAEVIRFQRLAVGEGIEKVVEDYAAEVMKQAGLA.

The tract at residues T79–V82 is involved in Mg(2+) ion dislocation from EF-Tu.

This sequence belongs to the EF-Ts family.

It is found in the cytoplasm. Associates with the EF-Tu.GDP complex and induces the exchange of GDP to GTP. It remains bound to the aminoacyl-tRNA.EF-Tu.GTP complex up to the GTP hydrolysis stage on the ribosome. This chain is Elongation factor Ts, found in Xanthomonas oryzae pv. oryzae (strain MAFF 311018).